Reading from the N-terminus, the 305-residue chain is Acetyl-coenzyme A carboxylase carboxyl transferase subunit beta (305 aa).

Positions 27–296 (LWVKCSACRE…PAAKADLAAR (270 aa)) constitute a CoA carboxyltransferase N-terminal domain. Residues C31, C34, C50, and C53 each contribute to the Zn(2+) site. A C4-type zinc finger spans residues 31-53 (CSACRELIYKKQLNDNLKVCPKC).

It belongs to the AccD/PCCB family. As to quaternary structure, acetyl-CoA carboxylase is a heterohexamer composed of biotin carboxyl carrier protein (AccB), biotin carboxylase (AccC) and two subunits each of ACCase subunit alpha (AccA) and ACCase subunit beta (AccD). Zn(2+) is required as a cofactor.

The protein resides in the cytoplasm. It carries out the reaction N(6)-carboxybiotinyl-L-lysyl-[protein] + acetyl-CoA = N(6)-biotinyl-L-lysyl-[protein] + malonyl-CoA. It participates in lipid metabolism; malonyl-CoA biosynthesis; malonyl-CoA from acetyl-CoA: step 1/1. Its function is as follows. Component of the acetyl coenzyme A carboxylase (ACC) complex. Biotin carboxylase (BC) catalyzes the carboxylation of biotin on its carrier protein (BCCP) and then the CO(2) group is transferred by the transcarboxylase to acetyl-CoA to form malonyl-CoA. The polypeptide is Acetyl-coenzyme A carboxylase carboxyl transferase subunit beta (Chloroflexus aggregans (strain MD-66 / DSM 9485)).